The following is a 178-amino-acid chain: Large ribosomal subunit protein uL6 (178 aa).

Belongs to the universal ribosomal protein uL6 family. As to quaternary structure, part of the 50S ribosomal subunit.

Its function is as follows. This protein binds to the 23S rRNA, and is important in its secondary structure. It is located near the subunit interface in the base of the L7/L12 stalk, and near the tRNA binding site of the peptidyltransferase center. This is Large ribosomal subunit protein uL6 from Campylobacter curvus (strain 525.92).